The chain runs to 44 residues: Photosystem I reaction center subunit IX (44 aa).

The chain crosses the membrane as a helical span at residues 7-27 (YLSVAPVLSTLWFGSLAGLLI).

Belongs to the PsaJ family.

Its subcellular location is the plastid. The protein localises to the chloroplast thylakoid membrane. Functionally, may help in the organization of the PsaE and PsaF subunits. This Fagopyrum esculentum subsp. ancestrale (Wild buckwheat) protein is Photosystem I reaction center subunit IX.